The following is a 349-amino-acid chain: GTP 3',8-cyclase (349 aa).

The 226-residue stretch at 24–249 (PFGRAITYLR…VDSDYQTGGP (226 aa)) folds into the Radical SAM core domain. GTP is bound at residue R33. The [4Fe-4S] cluster site is built by C40 and C44. Y46 contributes to the S-adenosyl-L-methionine binding site. A [4Fe-4S] cluster-binding site is contributed by C47. R82 is a binding site for GTP. G86 contacts S-adenosyl-L-methionine. GTP is bound at residue T116. S140 provides a ligand contact to S-adenosyl-L-methionine. GTP is bound at residue K176. Residue M210 coordinates S-adenosyl-L-methionine. Residues C273 and C276 each contribute to the [4Fe-4S] cluster site. 278-280 (RVR) provides a ligand contact to GTP. C290 provides a ligand contact to [4Fe-4S] cluster.

It belongs to the radical SAM superfamily. MoaA family. As to quaternary structure, monomer and homodimer. [4Fe-4S] cluster serves as cofactor.

The catalysed reaction is GTP + AH2 + S-adenosyl-L-methionine = (8S)-3',8-cyclo-7,8-dihydroguanosine 5'-triphosphate + 5'-deoxyadenosine + L-methionine + A + H(+). Its pathway is cofactor biosynthesis; molybdopterin biosynthesis. Catalyzes the cyclization of GTP to (8S)-3',8-cyclo-7,8-dihydroguanosine 5'-triphosphate. This is GTP 3',8-cyclase from Agrobacterium fabrum (strain C58 / ATCC 33970) (Agrobacterium tumefaciens (strain C58)).